The sequence spans 207 residues: 8-oxoguanine DNA glycosylase/AP lyase (207 aa).

Catalysis depends on residues Lys129 and Asp147.

The protein belongs to the type-2 OGG1 family.

It catalyses the reaction 2'-deoxyribonucleotide-(2'-deoxyribose 5'-phosphate)-2'-deoxyribonucleotide-DNA = a 3'-end 2'-deoxyribonucleotide-(2,3-dehydro-2,3-deoxyribose 5'-phosphate)-DNA + a 5'-end 5'-phospho-2'-deoxyribonucleoside-DNA + H(+). In terms of biological role, catalyzes the excision of an oxidatively damaged form of guanine (7,8-dihydro-8-oxoguanine = 8-oxoG) from DNA. Also cleaves the DNA backbone at apurinic/apyrimidinic sites (AP sites). The sequence is that of 8-oxoguanine DNA glycosylase/AP lyase from Thermotoga maritima (strain ATCC 43589 / DSM 3109 / JCM 10099 / NBRC 100826 / MSB8).